Consider the following 940-residue polypeptide: Translation initiation factor IF-2 (940 aa).

Disordered regions lie at residues 48–264 (ESFG…VESK) and 278–351 (QVAE…TERK). Basic and acidic residues-rich tracts occupy residues 65–95 (SKPE…KEEV), 112–125 (FKAE…EQAA), 155–206 (NNER…REAA), 232–258 (RTSE…KFEE), and 292–301 (ARPDKKRDFN). Residues 314–332 (NRNSQNQVRNQRTSNWNNN) are compositionally biased toward low complexity. The region spanning 442–609 (ERPPVVTIMG…TVLLVAEIQE (168 aa)) is the tr-type G domain. A G1 region spans residues 451–458 (GHVDHGKT). Residue 451–458 (GHVDHGKT) participates in GTP binding. Residues 476 to 480 (GITQH) form a G2 region. Residues 497–500 (DTPG) are G3. Residues 497–501 (DTPGH) and 551–554 (NKID) contribute to the GTP site. Positions 551–554 (NKID) are G4. The interval 587 to 589 (SAK) is G5.

Belongs to the TRAFAC class translation factor GTPase superfamily. Classic translation factor GTPase family. IF-2 subfamily.

It is found in the cytoplasm. Functionally, one of the essential components for the initiation of protein synthesis. Protects formylmethionyl-tRNA from spontaneous hydrolysis and promotes its binding to the 30S ribosomal subunits. Also involved in the hydrolysis of GTP during the formation of the 70S ribosomal complex. The sequence is that of Translation initiation factor IF-2 from Streptococcus suis (strain 98HAH33).